Here is a 513-residue protein sequence, read N- to C-terminus: ATP synthase subunit alpha (513 aa).

Residue glycine 169–threonine 176 participates in ATP binding.

The protein belongs to the ATPase alpha/beta chains family. In terms of assembly, F-type ATPases have 2 components, CF(1) - the catalytic core - and CF(0) - the membrane proton channel. CF(1) has five subunits: alpha(3), beta(3), gamma(1), delta(1), epsilon(1). CF(0) has three main subunits: a(1), b(2) and c(9-12). The alpha and beta chains form an alternating ring which encloses part of the gamma chain. CF(1) is attached to CF(0) by a central stalk formed by the gamma and epsilon chains, while a peripheral stalk is formed by the delta and b chains.

The protein localises to the cell inner membrane. It carries out the reaction ATP + H2O + 4 H(+)(in) = ADP + phosphate + 5 H(+)(out). Its function is as follows. Produces ATP from ADP in the presence of a proton gradient across the membrane. The alpha chain is a regulatory subunit. The polypeptide is ATP synthase subunit alpha (Thiobacillus denitrificans (strain ATCC 25259 / T1)).